The following is a 346-amino-acid chain: Methylthioribose-1-phosphate isomerase 1 (346 aa).

Substrate-binding positions include 48–50 (RGA), Arg-91, and Gln-196. The active-site Proton donor is Asp-237. Substrate is bound at residue 247-248 (NK).

This sequence belongs to the eIF-2B alpha/beta/delta subunits family. MtnA subfamily.

It carries out the reaction 5-(methylsulfanyl)-alpha-D-ribose 1-phosphate = 5-(methylsulfanyl)-D-ribulose 1-phosphate. Its pathway is amino-acid biosynthesis; L-methionine biosynthesis via salvage pathway; L-methionine from S-methyl-5-thio-alpha-D-ribose 1-phosphate: step 1/6. Functionally, catalyzes the interconversion of methylthioribose-1-phosphate (MTR-1-P) into methylthioribulose-1-phosphate (MTRu-1-P). The sequence is that of Methylthioribose-1-phosphate isomerase 1 from Pseudothermotoga lettingae (strain ATCC BAA-301 / DSM 14385 / NBRC 107922 / TMO) (Thermotoga lettingae).